Here is a 209-residue protein sequence, read N- to C-terminus: Uridine kinase (209 aa).

12 to 19 (GGSGSGKT) is an ATP binding site.

This sequence belongs to the uridine kinase family.

It localises to the cytoplasm. It catalyses the reaction uridine + ATP = UMP + ADP + H(+). The catalysed reaction is cytidine + ATP = CMP + ADP + H(+). Its pathway is pyrimidine metabolism; CTP biosynthesis via salvage pathway; CTP from cytidine: step 1/3. It participates in pyrimidine metabolism; UMP biosynthesis via salvage pathway; UMP from uridine: step 1/1. The protein is Uridine kinase of Streptococcus mutans serotype c (strain ATCC 700610 / UA159).